A 499-amino-acid polypeptide reads, in one-letter code: T-cell activation inhibitor, mitochondrial (499 aa).

The stretch at 206–233 (LRNSLPLRKELDRLKNELSELLQLSDIR) forms a coiled coil.

In terms of tissue distribution, expressed in peripheral blood leukocytes, mainly in T-lymphocytes.

The protein localises to the mitochondrion. Functionally, may regulate T-cell apoptosis. The chain is T-cell activation inhibitor, mitochondrial (TCAIM) from Mus musculus (Mouse).